The chain runs to 286 residues: Ribosome-inactivating protein momordin I (286 aa).

The N-terminal stretch at 1-23 is a signal peptide; sequence MSRFSVLSFLILAIFLGGSIVKG. E183 is an active-site residue. Residue N250 is glycosylated (N-linked (GlcNAc...) asparagine). The propeptide at 270–286 is removed in mature form; that stretch reads AEGDNGDVSTTHGFSSY.

Belongs to the ribosome-inactivating protein family. Type 1 RIP subfamily.

It carries out the reaction Endohydrolysis of the N-glycosidic bond at one specific adenosine on the 28S rRNA.. The polypeptide is Ribosome-inactivating protein momordin I (Momordica charantia (Bitter gourd)).